A 567-amino-acid chain; its full sequence is Ribulokinase (567 aa).

It belongs to the ribulokinase family.

It carries out the reaction D-ribulose + ATP = D-ribulose 5-phosphate + ADP + H(+). It catalyses the reaction L-ribulose + ATP = L-ribulose 5-phosphate + ADP + H(+). It functions in the pathway carbohydrate degradation; L-arabinose degradation via L-ribulose; D-xylulose 5-phosphate from L-arabinose (bacterial route): step 2/3. The polypeptide is Ribulokinase (Vibrio parahaemolyticus serotype O3:K6 (strain RIMD 2210633)).